Here is a 304-residue protein sequence, read N- to C-terminus: Foldase protein PrsA (304 aa).

The signal sequence occupies residues 1-19 (MKKKLLSVAAVASVFTLAA). Residue cysteine 20 is the site of N-palmitoyl cysteine attachment. Residue cysteine 20 is the site of S-diacylglycerol cysteine attachment. A PpiC domain is found at 140 to 231 (KVEVKASHIL…FGYHIIKVTD (92 aa)). The disordered stretch occupies residues 285 to 304 (FDLDKQEQQQMQQQMQQQQQ). The span at 292–304 (QQQMQQQMQQQQQ) shows a compositional bias: low complexity.

This sequence belongs to the PrsA family.

The protein localises to the cell membrane. It carries out the reaction [protein]-peptidylproline (omega=180) = [protein]-peptidylproline (omega=0). Functionally, plays a major role in protein secretion by helping the post-translocational extracellular folding of several secreted proteins. This Exiguobacterium sibiricum (strain DSM 17290 / CCUG 55495 / CIP 109462 / JCM 13490 / 255-15) protein is Foldase protein PrsA.